Reading from the N-terminus, the 152-residue chain is Methylglyoxal synthase (152 aa).

Residues 6–152 (RKISARKSIA…YDGYLAERLA (147 aa)) enclose the MGS-like domain. Residues His19, Lys23, 45–48 (TGTT), and 65–66 (SG) each bind substrate. Asp71 serves as the catalytic Proton donor/acceptor. His98 contributes to the substrate binding site.

Belongs to the methylglyoxal synthase family.

It catalyses the reaction dihydroxyacetone phosphate = methylglyoxal + phosphate. Functionally, catalyzes the formation of methylglyoxal from dihydroxyacetone phosphate. This Actinobacillus pleuropneumoniae serotype 3 (strain JL03) protein is Methylglyoxal synthase.